Consider the following 435-residue polypeptide: Probable tRNA pseudouridine synthase D (435 aa).

The active-site Nucleophile is Asp-95. Residues 170–396 form the TRUD domain; that stretch reads GVPNYFGTQR…SSGTRRAVLV (227 aa).

The protein belongs to the pseudouridine synthase TruD family.

The enzyme catalyses uridine(13) in tRNA = pseudouridine(13) in tRNA. In terms of biological role, could be responsible for synthesis of pseudouridine from uracil-13 in transfer RNAs. The chain is Probable tRNA pseudouridine synthase D from Natronomonas pharaonis (strain ATCC 35678 / DSM 2160 / CIP 103997 / JCM 8858 / NBRC 14720 / NCIMB 2260 / Gabara) (Halobacterium pharaonis).